Consider the following 152-residue polypeptide: Superoxide dismutase [Cu-Zn] (152 aa).

Residues His45, His47, and His62 each contribute to the Cu cation site. An intrachain disulfide couples Cys56 to Cys145. Residues His62, His70, His79, and Asp82 each contribute to the Zn(2+) site. His119 is a binding site for Cu cation.

It belongs to the Cu-Zn superoxide dismutase family. Homodimer. Cu cation is required as a cofactor. The cofactor is Zn(2+).

It is found in the cytoplasm. It catalyses the reaction 2 superoxide + 2 H(+) = H2O2 + O2. Its function is as follows. Destroys radicals which are normally produced within the cells and which are toxic to biological systems. The sequence is that of Superoxide dismutase [Cu-Zn] (SODCC) from Paulownia kawakamii (Dragon tree).